We begin with the raw amino-acid sequence, 388 residues long: MPLQDFLFTSESVTEGHPDKMADQISDAVLDAVLRQDPKGRVACETLLKTGYVMIAGEITTKARIDYPKLARETVRRIGYTSGDMGFDANTCAVLVAVDQQSPDIGQGVDTGGAGDQGMMFGYACDETPELMPAPIQYAHAVTKQLAKARRAGLDLLRPDGKSQVSVEYRDGRPVRIDTVVVSTQHAESVSNKRLHEAVREQVIAKALPKRLLDRKTRILINPTGRFVIGGPMGDTGVTGRKIIVDTYGGMGRHGGGAFSGKDPSKVDRSAAYMGRYIAKNVVAAGLASRCEVQVAYAIGVAEPVSVMVDTFGTAKVPEGKIARAVREVFGLTPRAIIEGLDLLRPVYEKTAAYGHFGRTEKTFTWERTDKKEALADAAGLSKIRAVI.

Residue histidine 17 participates in ATP binding. A Mg(2+)-binding site is contributed by aspartate 19. Glutamate 45 is a K(+) binding site. 2 residues coordinate L-methionine: glutamate 58 and glutamine 101. The flexible loop stretch occupies residues 101-111; that stretch reads QSPDIGQGVDT. ATP is bound by residues 160-162, 226-227, aspartate 235, 241-242, alanine 258, and lysine 262; these read DGK, RF, and RK. Aspartate 235 is a binding site for L-methionine. Lysine 266 lines the L-methionine pocket.

This sequence belongs to the AdoMet synthase family. In terms of assembly, homotetramer; dimer of dimers. Requires Mg(2+) as cofactor. It depends on K(+) as a cofactor.

The protein resides in the cytoplasm. It carries out the reaction L-methionine + ATP + H2O = S-adenosyl-L-methionine + phosphate + diphosphate. It participates in amino-acid biosynthesis; S-adenosyl-L-methionine biosynthesis; S-adenosyl-L-methionine from L-methionine: step 1/1. In terms of biological role, catalyzes the formation of S-adenosylmethionine (AdoMet) from methionine and ATP. The overall synthetic reaction is composed of two sequential steps, AdoMet formation and the subsequent tripolyphosphate hydrolysis which occurs prior to release of AdoMet from the enzyme. In Anaeromyxobacter sp. (strain K), this protein is S-adenosylmethionine synthase.